A 1064-amino-acid polypeptide reads, in one-letter code: Ribosome quality control complex subunit NEMF (1064 aa).

Residue Thr7 is modified to Phosphothreonine. The stretch at 296 to 359 forms a coiled coil; it reads VDEFYSKIEG…LIEMNLQIVD (64 aa). Ser417 is modified (phosphoserine). The disordered stretch occupies residues 420 to 451; that stretch reads EDGDGDASIENSDAEAPKGKKKKQKNKQLQKP. Over residues 438–447 the composition is skewed to basic residues; the sequence is GKKKKQKNKQ. The stretch at 481-512 forms a coiled coil; it reads AAKKTQRTVEAAEKAFKSAEKKTKQTLKEVQT. Over residues 694–707 the composition is skewed to acidic residues; the sequence is EQLEGGDSSEEETE. 2 disordered regions span residues 694-718 and 731-973; these read EQLE…DVEL and SGRD…SLTG. The segment covering 731-756 has biased composition (basic and acidic residues); the sequence is SGRDELSSEDGEAKAVTKDQEPIGEM. Position 737 is a phosphoserine (Ser737). Residues 771–781 are compositionally biased toward polar residues; that stretch reads IDLSHLQSQRP. Residues 828 to 839 are compositionally biased toward basic and acidic residues; that stretch reads IEEKDKERESAV. The stretch at 858-882 forms a coiled coil; that stretch reads KRGQKSKMKKMKEKYKDQDDEDREL. Basic residues predominate over residues 859–870; that stretch reads RGQKSKMKKMKE. Residues 947–959 show a composition bias toward basic and acidic residues; it reads DDPHDDKEEHDLD. The segment covering 960–973 has biased composition (polar residues); the sequence is QQGNEENLFDSLTG.

The protein belongs to the NEMF family. In terms of assembly, component of the ribosome quality control complex (RQC), composed of the E3 ubiquitin ligase LTN1, TCF25 and NEMF associated with the 60S ribosomal subunit. The complex probably also contains VCP/p97 and its ubiquitin-binding cofactors. Interacts (via its N-terminus) with XPO1.

It is found in the cytoplasm. The protein resides in the cytosol. The protein localises to the nucleus. Key component of the ribosome quality control complex (RQC), a ribosome-associated complex that mediates the extraction of incompletely synthesized nascent chains from stalled ribosomes as well as their ubiquitin-mediated proteasomal degradation. Thereby, frees 60S subunit ribosomes from the stalled translation complex and prevents the accumulation of nascent polypeptide chains that are potentially toxic for the cell. Within the RQC complex, NEMF specifically binds stalled 60S ribosomal subunits by recognizing an exposed, nascent chain-conjugated tRNA moiety and promotes the recruitment of LTN1 to stalled 60S subunits. Following binding to stalled 60S ribosomal subunits, NEMF mediates CAT tailing by recruiting alanine-charged tRNA to the A-site and directing the elongation of stalled nascent chains independently of mRNA or 40S subunits, leading to non-templated C-terminal alanine extensions (CAT tails). Mainly recruits alanine-charged tRNAs, but can also other amino acid-charged tRNAs. CAT tailing is required to promote ubiquitination of stalled nascent chains by different E3 ubiquitin-protein ligases. In the canonical RQC pathway (RQC-L), CAT tailing facilitates LTN1-dependent ubiquitination by exposing lysine residues that would otherwise remain buried in the ribosomal exit tunnel. In the alternative RQC pathway (RQC-C) CAT tailing creates an C-degron mainly composed of alanine that is recognized by the CRL2(KLHDC10) and RCHY1/PIRH2 E3 ligases, leading to ubiquitination and degradation of stalled nascent chains. NEMF may also indirectly play a role in nuclear export. This chain is Ribosome quality control complex subunit NEMF, found in Mus musculus (Mouse).